A 460-amino-acid chain; its full sequence is Cysteine--tRNA ligase (460 aa).

Residue cysteine 29 participates in Zn(2+) binding. Residues 31–41 (ATPQSSPHIGH) carry the 'HIGH' region motif. Zn(2+) is bound by residues cysteine 212, histidine 237, and glutamate 241. A 'KMSKS' region motif is present at residues 268–272 (KMSKS). Lysine 271 serves as a coordination point for ATP.

Belongs to the class-I aminoacyl-tRNA synthetase family. Monomer. Zn(2+) serves as cofactor.

Its subcellular location is the cytoplasm. The enzyme catalyses tRNA(Cys) + L-cysteine + ATP = L-cysteinyl-tRNA(Cys) + AMP + diphosphate. This Corynebacterium glutamicum (strain R) protein is Cysteine--tRNA ligase.